We begin with the raw amino-acid sequence, 452 residues long: Plasmepsin I (452 aa).

Topologically, residues 1–37 (MALSIKEDFSSAFAKNESAVNSSTFNNNMKTWKIQKR) are cytoplasmic. A propeptide spanning residues 1–123 (MALSIKEDFS…TGLTQKPHLG (123 aa)) is cleaved from the precursor. Residues 38 to 58 (FQILYVFFFLLITGALFYYLI) traverse the membrane as a helical; Signal-anchor for type II membrane protein segment. At 59–452 (DNVLFPKNKK…VGFALAKKKL (394 aa)) the chain is on the lumenal side. The Peptidase A1 domain maps to 139–446 (YYGEAQIGDN…DYDNHTVGFA (308 aa)). D157 is an active-site residue. A disulfide bond links C170 and C175. The active site involves D337. An intrachain disulfide couples C372 to C408.

Belongs to the peptidase A1 family. Not N-glycosylated. Post-translationally, proteolytically cleaved into the soluble active mature form in the digestive vacuole by cysteine protease falcipains; the process begins at the early ring stage. Proteolysis requires an acidic environment.

The protein resides in the membrane. It is found in the vacuole lumen. The protein localises to the vacuole membrane. The catalysed reaction is Hydrolysis of the 33-Phe-|-Leu-34 bond in the alpha-chain of hemoglobin, leading to denaturation of molecule.. Inhibited by KNI derived compounds KNI-10333 and to a lesser extent KNI-10743. Its function is as follows. During the asexual blood stage, catalyzes the initial cleavage of native host hemoglobin (Hb) resulting in Hb denaturation; specifically cleaves between Phe-33 and Leu-34 of Hb alpha-chain. Digestion of host Hb is an essential step which provides the parasite with amino acids for protein synthesis, and regulates osmolarity. The polypeptide is Plasmepsin I (Plasmodium falciparum (isolate 3D7)).